Reading from the N-terminus, the 1103-residue chain is A disintegrin and metalloproteinase with thrombospondin motifs 10 (1103 aa).

The signal sequence occupies residues 1-25 (MAPACQILRWALALGLGLMFEVTHA). Residues 26 to 233 (FRSQDEFLSS…TERGQPGLKR (208 aa)) constitute a propeptide that is removed on maturation. N-linked (GlcNAc...) asparagine glycans are attached at residues Asn-90, Asn-222, and Asn-323. Residues 213-233 (KPPPARPLGNETERGQPGLKR) are disordered. The region spanning 239-457 (RYVETLVVAD…GLGLCLNNRP (219 aa)) is the Peptidase M12B domain. Cystine bridges form between Cys-315/Cys-376, Cys-351/Cys-358, Cys-370/Cys-452, Cys-409/Cys-436, Cys-479/Cys-501, Cys-490/Cys-508, Cys-496/Cys-531, Cys-521/Cys-536, Cys-559/Cys-596, Cys-563/Cys-601, and Cys-574/Cys-586. His-392 serves as a coordination point for Zn(2+). Glu-393 is a catalytic residue. Residues His-396 and His-402 each contribute to the Zn(2+) site. The Disintegrin domain occupies 460 to 546 (QDFVYPTVAP…VPFGSRPEGV (87 aa)). The 56-residue stretch at 547 to 602 (DGAWGPWTPWGDCSRTCGGGVSSSSRHCDSPRPTIGGKYCLGERRRHRSCNTDDCP) folds into the TSP type-1 1 domain. The segment at 706–828 (ETIEGVFSPA…IARDSLPPYS (123 aa)) is spacer. N-linked (GlcNAc...) asparagine glycosylation is found at Asn-740 and Asn-795. TSP type-1 domains lie at 825–883 (PPYS…NTEP), 884–945 (CPPD…PTCP), 947–1001 (EWAA…NLRR), and 1003–1058 (PPAR…AKCD). An N-linked (GlcNAc...) asparagine glycan is attached at Asn-892. One can recognise a PLAC domain in the interval 1065–1103 (GPEECKDVNKVAYCPLVLKFQFCSRAYFRQMCCKTCHGH).

In terms of assembly, interacts with FBN1; this interaction promotes microfibrils assembly. It depends on Zn(2+) as a cofactor. Glycosylated. Can be O-fucosylated by POFUT2 on a serine or a threonine residue found within the consensus sequence C1-X(2)-(S/T)-C2-G of the TSP type-1 repeat domains where C1 and C2 are the first and second cysteine residue of the repeat, respectively. Fucosylated repeats can then be further glycosylated by the addition of a beta-1,3-glucose residue by the glucosyltransferase, B3GALTL. Fucosylation mediates the efficient secretion of ADAMTS family members. Can also be C-glycosylated with one or two mannose molecules on tryptophan residues within the consensus sequence W-X-X-W of the TPRs, and N-glycosylated. These other glycosylations can also facilitate secretion. Widely expressed in adult tissues.

The protein localises to the secreted. The protein resides in the extracellular space. It is found in the extracellular matrix. Functionally, metalloprotease that participate in microfibrils assembly. Microfibrils are extracellular matrix components occurring independently or along with elastin in the formation of elastic tissues. The polypeptide is A disintegrin and metalloproteinase with thrombospondin motifs 10 (ADAMTS10) (Homo sapiens (Human)).